We begin with the raw amino-acid sequence, 170 residues long: 6,7-dimethyl-8-ribityllumazine synthase 2 (170 aa).

Residues Trp-25, 59–61 (AFE), and 83–85 (LVV) each bind 5-amino-6-(D-ribitylamino)uracil. Catalysis depends on Arg-91, which acts as the Proton donor. Residue Ser-116 participates in 5-amino-6-(D-ribitylamino)uracil binding. (2S)-2-hydroxy-3-oxobutyl phosphate is bound at residue His-130.

Belongs to the DMRL synthase family. In terms of assembly, forms an icosahedral capsid composed of 60 subunits, arranged as a dodecamer of pentamers.

It catalyses the reaction (2S)-2-hydroxy-3-oxobutyl phosphate + 5-amino-6-(D-ribitylamino)uracil = 6,7-dimethyl-8-(1-D-ribityl)lumazine + phosphate + 2 H2O + H(+). Its pathway is cofactor biosynthesis; riboflavin biosynthesis; riboflavin from 2-hydroxy-3-oxobutyl phosphate and 5-amino-6-(D-ribitylamino)uracil: step 1/2. Functionally, catalyzes the formation of 6,7-dimethyl-8-ribityllumazine by condensation of 5-amino-6-(D-ribitylamino)uracil with 3,4-dihydroxy-2-butanone 4-phosphate. This is the penultimate step in the biosynthesis of riboflavin. This Pseudomonas syringae pv. tomato (strain ATCC BAA-871 / DC3000) protein is 6,7-dimethyl-8-ribityllumazine synthase 2.